A 54-amino-acid chain; its full sequence is uncharacterized protein (54 aa).

A signal peptide spans 1–13 (MLLCFHMCQRIMW).

Its subcellular location is the secreted. This is an uncharacterized protein from Saccharomyces cerevisiae (strain ATCC 204508 / S288c) (Baker's yeast).